The following is a 266-amino-acid chain: Undecaprenyl-diphosphatase (266 aa).

A run of 8 helical transmembrane segments spans residues 1–21 (MDTF…FLPI), 39–59 (QGLS…VIYF), 87–107 (WWII…KDFI), 114–134 (AEVI…ADKM), 149–169 (ALLI…RSGA), 183–203 (AAAR…AILV), 218–238 (ALIL…HYFL), and 246–266 (MTPF…FIFF).

This sequence belongs to the UppP family.

It localises to the cell inner membrane. It catalyses the reaction di-trans,octa-cis-undecaprenyl diphosphate + H2O = di-trans,octa-cis-undecaprenyl phosphate + phosphate + H(+). Functionally, catalyzes the dephosphorylation of undecaprenyl diphosphate (UPP). Confers resistance to bacitracin. This is Undecaprenyl-diphosphatase from Shewanella baltica (strain OS223).